The following is a 3164-amino-acid chain: Protein eyes shut homolog (3164 aa).

The signal sequence occupies residues 1-21; the sequence is MTDKSIIILSLMVFHSSFING. N-linked (GlcNAc...) asparagine glycans are attached at residues asparagine 42, asparagine 105, asparagine 117, and asparagine 166. EGF-like domains are found at residues 170-212, 213-254, and 256-292; these read KQQF…KYCQ, ELDA…KNCS, and IIGQ…PFCE. Intrachain disulfides connect cysteine 174-cysteine 189, cysteine 183-cysteine 200, cysteine 202-cysteine 211, cysteine 217-cysteine 228, cysteine 222-cysteine 242, cysteine 244-cysteine 253, cysteine 260-cysteine 270, cysteine 265-cysteine 280, and cysteine 282-cysteine 291. Asparagine 225, asparagine 252, asparagine 269, and asparagine 272 each carry an N-linked (GlcNAc...) asparagine glycan. N-linked (GlcNAc...) asparagine glycosylation is found at asparagine 311 and asparagine 343. 2 consecutive EGF-like domains span residues 332-368 and 370-406; these read DVSE…LLCK and IQTS…KNCE. 5 cysteine pairs are disulfide-bonded: cysteine 336-cysteine 347, cysteine 341-cysteine 356, cysteine 358-cysteine 367, cysteine 374-cysteine 385, and cysteine 396-cysteine 405. Asparagine 382 carries N-linked (GlcNAc...) asparagine glycosylation. Asparagine 506, asparagine 521, and asparagine 566 each carry an N-linked (GlcNAc...) asparagine glycan. Positions 567 to 602 constitute an EGF-like 6 domain; that stretch reads TTDDQENECQHEAICKDEINRPRCSCSLSYIGRLCV. Intrachain disulfides connect cysteine 575–cysteine 590 and cysteine 592–cysteine 601. Asparagine 611 and asparagine 654 each carry an N-linked (GlcNAc...) asparagine glycan. Residues 643-679 enclose the EGF-like 7 domain; the sequence is DTEDCKSVSCKNGTTSIHLRGYFFCKCVPGFKGTQRE. 6 disulfide bridges follow: cysteine 652-cysteine 667, cysteine 685-cysteine 696, cysteine 690-cysteine 705, cysteine 707-cysteine 719, cysteine 737-cysteine 748, and cysteine 742-cysteine 757. In terms of domain architecture, EGF-like 8; calcium-binding spans 681–720; it reads DIDECASHPCKNGATCIDQPGNYFCQCVPPFKVVDGFSCL. The EGF-like 9; calcium-binding domain occupies 733-769; sequence DIDDCILNACEHNSTCKDLHLSYQCVCLSGWEGNFSE. N-linked (GlcNAc...) asparagine glycosylation is found at asparagine 745, asparagine 766, asparagine 782, asparagine 783, and asparagine 805. The EGF-like 10; calcium-binding domain occupies 771–807; it reads ESNECKMNPCKNNSTCIDLYKSYRCECTSGWTGQNCS. Disulfide bonds link cysteine 775/cysteine 786, cysteine 780/cysteine 795, cysteine 797/cysteine 806, cysteine 813/cysteine 824, cysteine 818/cysteine 835, cysteine 837/cysteine 846, cysteine 853/cysteine 866, cysteine 860/cysteine 876, cysteine 878/cysteine 887, cysteine 894/cysteine 905, cysteine 899/cysteine 914, cysteine 916/cysteine 925, cysteine 932/cysteine 943, cysteine 937/cysteine 952, cysteine 954/cysteine 963, cysteine 970/cysteine 981, cysteine 975/cysteine 990, cysteine 992/cysteine 1001, cysteine 1008/cysteine 1019, cysteine 1013/cysteine 1028, cysteine 1030/cysteine 1039, cysteine 1046/cysteine 1056, cysteine 1051/cysteine 1065, cysteine 1067/cysteine 1076, cysteine 1083/cysteine 1094, cysteine 1088/cysteine 1103, cysteine 1105/cysteine 1114, cysteine 1121/cysteine 1137, cysteine 1131/cysteine 1147, cysteine 1149/cysteine 1158, cysteine 1165/cysteine 1176, cysteine 1170/cysteine 1185, and cysteine 1187/cysteine 1196. EGF-like domains lie at 809–847, 849–888, and 890–926; these read EINE…RFCH, RYNP…KNCE, and DVKE…SLCE. Asparagine 862 and asparagine 863 each carry an N-linked (GlcNAc...) asparagine glycan. Positions 928 to 964 constitute an EGF-like 14; calcium-binding domain; the sequence is EINECSSEPCKNNGTCVDLTNRFFCNCEPGYHGPFCE. Asparagine 940 carries N-linked (GlcNAc...) asparagine glycosylation. An EGF-like 15 domain is found at 966 to 1002; it reads DVNKCKISPCLDEENCVYRTDGYNCLCAPGYTGINCE. The 37-residue stretch at 1004–1040 folds into the EGF-like 16; calcium-binding domain; it reads NLDECLSEPCLHDGVCIDGINHYTCDCKSGFFGTHCE. EGF-like domains follow at residues 1042–1077, 1079–1115, and 1117–1159; these read NAND…TQCK, KIND…AYCE, and SIDN…QFCE. The EGF-like 20; calcium-binding domain occupies 1161 to 1197; sequence NINECSSSPCLHGADCEDHINGYVCKCQPGWSGHHCE. Asparagine 1509, asparagine 1522, asparagine 1906, asparagine 1941, asparagine 1960, and asparagine 2033 each carry an N-linked (GlcNAc...) asparagine glycan. A Laminin G-like 1 domain is found at 1883–2063; the sequence is FSCVRYYGDS…AVKNYHINNC (181 aa). 4 disulfides stabilise this stretch: cysteine 2037/cysteine 2063, cysteine 2103/cysteine 2114, cysteine 2108/cysteine 2128, and cysteine 2130/cysteine 2139. The region spanning 2099–2140 is the EGF-like 21 domain; it reads APSVCQQDVCHNGGTCHPIFLSRGIVSFQCDCPLHFTGRFCE. The Laminin G-like 2 domain maps to 2145 to 2339; that stretch reads LFFPSFNGNS…NIENCHVPWC (195 aa). N-linked (GlcNAc...) asparagine glycosylation is found at asparagine 2170, asparagine 2185, and asparagine 2228. 6 cysteine pairs are disulfide-bonded: cysteine 2308-cysteine 2339, cysteine 2339-cysteine 2350, cysteine 2344-cysteine 2359, cysteine 2375-cysteine 2386, cysteine 2380-cysteine 2396, and cysteine 2398-cysteine 2407. EGF-like domains are found at residues 2335-2368 and 2371-2408; these read HVPW…YSGK and QFAS…PLCT. Asparagine 2347 is a glycosylation site (N-linked (GlcNAc...) asparagine). 5 N-linked (GlcNAc...) asparagine glycosylation sites follow: asparagine 2412, asparagine 2453, asparagine 2484, asparagine 2506, and asparagine 2532. The 191-residue stretch at 2419–2609 folds into the Laminin G-like 3 domain; the sequence is SGTDAFGYTS…PNAGRSVGQC (191 aa). Intrachain disulfides connect cysteine 2576–cysteine 2609, cysteine 2614–cysteine 2625, and cysteine 2619–cysteine 2634. EGF-like domains follow at residues 2610 to 2646 and 2648 to 2689; these read HASP…AFCT and TVST…IYCE. The N-linked (GlcNAc...) asparagine glycan is linked to asparagine 2635. Cystine bridges form between cysteine 2636/cysteine 2645, cysteine 2652/cysteine 2668, cysteine 2662/cysteine 2677, and cysteine 2679/cysteine 2688. Positions 2717–2895 constitute a Laminin G-like 4 domain; the sequence is DPSFRSNELS…AKGGSNVGDC (179 aa). N-linked (GlcNAc...) asparagine glycosylation is found at asparagine 2775, asparagine 2800, and asparagine 2824. Disulfide bonds link cysteine 2868/cysteine 2895, cysteine 2900/cysteine 2911, cysteine 2905/cysteine 2920, and cysteine 2922/cysteine 2931. EGF-like domains are found at residues 2896-2932 and 2933-2970; these read DGTA…NTCN and QSVY…RYCE. Asparagine 2914 is a glycosylation site (N-linked (GlcNAc...) asparagine). N-linked (GlcNAc...) asparagine glycosylation occurs at asparagine 2932. Cystine bridges form between cysteine 2937-cysteine 2948, cysteine 2942-cysteine 2958, and cysteine 2960-cysteine 2969. An N-linked (GlcNAc...) asparagine glycan is attached at asparagine 2951. Residues asparagine 2971, asparagine 3006, asparagine 3036, asparagine 3057, asparagine 3073, and asparagine 3082 are each glycosylated (N-linked (GlcNAc...) asparagine). The Laminin G-like 5 domain occupies 2975–3164; the sequence is FSTAKFMGNS…YDGDEQNEVT (190 aa).

The protein belongs to the EYS family.

It is found in the cell projection. The protein localises to the cilium. It localises to the photoreceptor outer segment. The protein resides in the cytoplasm. Its subcellular location is the cytoskeleton. It is found in the cilium axoneme. The protein localises to the microtubule organizing center. It localises to the centrosome. The protein resides in the secreted. Its subcellular location is the extracellular space. It is found in the extracellular matrix. The protein localises to the interphotoreceptor matrix. Functionally, required to maintain the integrity of photoreceptor cells. Specifically required for normal morphology of the photoreceptor ciliary pocket, and might thus facilitate protein trafficking between the photoreceptor inner and outer segments via the transition zone. This is Protein eyes shut homolog (EYS) from Pongo abelii (Sumatran orangutan).